Consider the following 80-residue polypeptide: Large ribosomal subunit protein eL13 (80 aa).

Belongs to the eukaryotic ribosomal protein eL13 family.

This is Large ribosomal subunit protein eL13 from Aeropyrum pernix (strain ATCC 700893 / DSM 11879 / JCM 9820 / NBRC 100138 / K1).